The primary structure comprises 438 residues: tRNA modification GTPase MnmE (438 aa).

Residues arginine 21, glutamate 79, and lysine 118 each coordinate (6S)-5-formyl-5,6,7,8-tetrahydrofolate. One can recognise a TrmE-type G domain in the interval 215-362; sequence GFSIVLIGAP…LEARIEQIVR (148 aa). K(+) is bound at residue asparagine 225. GTP is bound by residues 225 to 230, 244 to 250, and 269 to 272; these read NAGKSS, TDIPGTT, and DTAG. Serine 229 provides a ligand contact to Mg(2+). 3 residues coordinate K(+): threonine 244, isoleucine 246, and threonine 249. Threonine 250 is a Mg(2+) binding site. Lysine 438 is a (6S)-5-formyl-5,6,7,8-tetrahydrofolate binding site.

This sequence belongs to the TRAFAC class TrmE-Era-EngA-EngB-Septin-like GTPase superfamily. TrmE GTPase family. Homodimer. Heterotetramer of two MnmE and two MnmG subunits. K(+) is required as a cofactor.

Its subcellular location is the cytoplasm. Its function is as follows. Exhibits a very high intrinsic GTPase hydrolysis rate. Involved in the addition of a carboxymethylaminomethyl (cmnm) group at the wobble position (U34) of certain tRNAs, forming tRNA-cmnm(5)s(2)U34. The sequence is that of tRNA modification GTPase MnmE from Maricaulis maris (strain MCS10) (Caulobacter maris).